Consider the following 391-residue polypeptide: mRNA-capping enzyme subunit alpha (391 aa).

The N6-GMP-lysine intermediate role is filled by lysine 63. The tract at residues 363–391 (KERNRRPRDEDRKRVGGDDHDHGAKRARQ) is disordered.

Belongs to the eukaryotic GTase family. Heterodimer. The mRNA-capping enzyme is composed of two separate chains alpha and beta, respectively a mRNA guanylyltransferase and an mRNA 5'-triphosphate monophosphatase.

It localises to the nucleus. It carries out the reaction a 5'-end diphospho-ribonucleoside in mRNA + GTP + H(+) = a 5'-end (5'-triphosphoguanosine)-ribonucleoside in mRNA + diphosphate. Functionally, second step of mRNA capping. Transfer of the GMP moiety of GTP to the 5'-end of RNA via an enzyme-GMP covalent reaction intermediate. This is mRNA-capping enzyme subunit alpha (CEG1) from Yarrowia lipolytica (strain CLIB 122 / E 150) (Yeast).